Consider the following 155-residue polypeptide: uncharacterized protein (155 aa).

The HTH asnC-type domain maps to 4-65; the sequence is IDEVDEIILR…IIDHSFLGEF (62 aa). Residues 23–42 constitute a DNA-binding region (H-T-H motif); that stretch reads LTELSRKVGLTPAAIKNRVE.

This is an uncharacterized protein from Pyrococcus furiosus (strain ATCC 43587 / DSM 3638 / JCM 8422 / Vc1).